Reading from the N-terminus, the 272-residue chain is MSYLEAIILGLVQGLTEFLPISSSAHLRIAGLFMGGDPGATFTAITQLGTELAVVVFFRKRIGKVLSAWSRSLRGGMPKGDPDVRMGWLVIIGTIPIGIAGYLFQDTIRSTFRSLWIVAIVLIVFGILLGLADRYSRSDRLEKDMTYGHGVSIGIAQALALVPGVSRSGATTTAARAFGYSRPVAAEYSFLLAVPAVFGSGLYELVKSFDETGQAGAGQTAVATLIAFIVGLAVIAGLMRYISTRTFMPFVVYRVALGVVLLVLLGTGAIAA.

Transmembrane regions (helical) follow at residues 1 to 21, 38 to 58, 84 to 104, 112 to 132, 145 to 165, 183 to 203, 219 to 239, and 250 to 270; these read MSYLEAIILGLVQGLTEFLPI, PGATFTAITQLGTELAVVVFF, VRMGWLVIIGTIPIGIAGYLF, FRSLWIVAIVLIVFGILLGLA, MTYGHGVSIGIAQALALVPGV, PVAAEYSFLLAVPAVFGSGLY, QTAVATLIAFIVGLAVIAGLM, and FVVYRVALGVVLLVLLGTGAI.

The protein belongs to the UppP family.

It localises to the cell membrane. It carries out the reaction di-trans,octa-cis-undecaprenyl diphosphate + H2O = di-trans,octa-cis-undecaprenyl phosphate + phosphate + H(+). In terms of biological role, catalyzes the dephosphorylation of undecaprenyl diphosphate (UPP). Confers resistance to bacitracin. This Clavibacter michiganensis subsp. michiganensis (strain NCPPB 382) protein is Undecaprenyl-diphosphatase.